A 255-amino-acid polypeptide reads, in one-letter code: Indole-3-glycerol phosphate synthase (255 aa).

This sequence belongs to the TrpC family.

It carries out the reaction 1-(2-carboxyphenylamino)-1-deoxy-D-ribulose 5-phosphate + H(+) = (1S,2R)-1-C-(indol-3-yl)glycerol 3-phosphate + CO2 + H2O. It functions in the pathway amino-acid biosynthesis; L-tryptophan biosynthesis; L-tryptophan from chorismate: step 4/5. In Streptococcus gordonii (strain Challis / ATCC 35105 / BCRC 15272 / CH1 / DL1 / V288), this protein is Indole-3-glycerol phosphate synthase.